A 522-amino-acid polypeptide reads, in one-letter code: Anthranilate synthase component 1 (522 aa).

Residues Ser-40 and Pro-292–Met-294 each bind L-tryptophan. Gly-329 to Thr-330 contributes to the chorismate binding site. Glu-362 is a Mg(2+) binding site. Chorismate-binding positions include Tyr-450, Arg-470, Gly-484–Gly-486, and Gly-486. Residue Glu-499 coordinates Mg(2+).

This sequence belongs to the anthranilate synthase component I family. Heterotetramer consisting of two non-identical subunits: a beta subunit (TrpG) and a large alpha subunit (TrpE). Mg(2+) is required as a cofactor.

The catalysed reaction is chorismate + L-glutamine = anthranilate + pyruvate + L-glutamate + H(+). Its pathway is amino-acid biosynthesis; L-tryptophan biosynthesis; L-tryptophan from chorismate: step 1/5. Its activity is regulated as follows. Feedback inhibited by tryptophan. Functionally, part of a heterotetrameric complex that catalyzes the two-step biosynthesis of anthranilate, an intermediate in the biosynthesis of L-tryptophan. In the first step, the glutamine-binding beta subunit (TrpG) of anthranilate synthase (AS) provides the glutamine amidotransferase activity which generates ammonia as a substrate that, along with chorismate, is used in the second step, catalyzed by the large alpha subunit of AS (TrpE) to produce anthranilate. In the absence of TrpG, TrpE can synthesize anthranilate directly from chorismate and high concentrations of ammonia. This Buchnera aphidicola subsp. Baizongia pistaciae (strain Bp) protein is Anthranilate synthase component 1 (trpE).